Consider the following 799-residue polypeptide: Disintegrin and metalloproteinase domain-containing protein B (799 aa).

Residues 1–23 (MKAFSCLLSVIATAASLFQHVDA) form the signal peptide. The Extracellular segment spans residues 24-707 (RSHARDKLNN…VSDWVSRHKP (684 aa)). Residues Asn-33, Asn-227, Asn-228, Asn-314, and Asn-408 are each glycosylated (N-linked (GlcNAc...) asparagine). Residues 272–511 (KVALIGVVAD…RTILTSCLTT (240 aa)) enclose the Peptidase M12B domain. Disulfide bonds link Cys-396–Cys-496, Cys-449–Cys-460, and Cys-581–Cys-601. His-432 is a Zn(2+) binding site. The active site involves Glu-433. 2 residues coordinate Zn(2+): His-436 and His-442. Positions 520-609 (GQQCGNGIVE…DCPHDIHSKD (90 aa)) constitute a Disintegrin domain. Residues 708–728 (IVIGVAVGAGCLLLLAIASCI) traverse the membrane as a helical segment. Topologically, residues 729–799 (CGRSRRQRPR…PGHLPSTRYA (71 aa)) are cytoplasmic. The disordered stretch occupies residues 753–799 (VYNGWNGAPPNAQQSSPGGHPPYNNIPPPINAPPPAYPGHLPSTRYA). The span at 776–789 (NNIPPPINAPPPAY) shows a compositional bias: pro residues.

It depends on Zn(2+) as a cofactor.

The protein resides in the membrane. In terms of biological role, probable zinc protease. This is Disintegrin and metalloproteinase domain-containing protein B (ADM-B) from Arthroderma benhamiae (strain ATCC MYA-4681 / CBS 112371) (Trichophyton mentagrophytes).